The primary structure comprises 1199 residues: DNA-directed RNA polymerase subunit beta (1199 aa).

Residues Glu1177–Glu1199 form a disordered region.

It belongs to the RNA polymerase beta chain family. The RNAP catalytic core consists of 2 alpha, 1 beta, 1 beta' and 1 omega subunit. When a sigma factor is associated with the core the holoenzyme is formed, which can initiate transcription.

It carries out the reaction RNA(n) + a ribonucleoside 5'-triphosphate = RNA(n+1) + diphosphate. Its function is as follows. DNA-dependent RNA polymerase catalyzes the transcription of DNA into RNA using the four ribonucleoside triphosphates as substrates. The polypeptide is DNA-directed RNA polymerase subunit beta (Ligilactobacillus salivarius (strain UCC118) (Lactobacillus salivarius)).